Consider the following 235-residue polypeptide: MLYSIKMRAESGSRHISGAERIVERRDMAQAMDALTRRGMEHPNGPAEAVTVTVRPITRPLMHIQALPVHEPHVRDQHEARQVLTEELRGMALDPSPVLDLLYSLRKPMRGAVLLDVTGMKRLEPDPQRGVRATCMDYTGNRCEGKNHFREALCLASKVAHCPQIIGELCISDDPDYTTGYFASQVRGYVRIHHIKQAGQQLGGRIFLFRGQQAEIGQCVDYLENQPVMVVMESL.

This sequence belongs to the BioW family. As to quaternary structure, homodimer. Requires Mg(2+) as cofactor.

It carries out the reaction heptanedioate + ATP + CoA = 6-carboxyhexanoyl-CoA + AMP + diphosphate. The protein operates within metabolic intermediate metabolism; pimeloyl-CoA biosynthesis; pimeloyl-CoA from pimelate: step 1/1. Functionally, catalyzes the transformation of pimelate into pimeloyl-CoA with concomitant hydrolysis of ATP to AMP. This chain is 6-carboxyhexanoate--CoA ligase, found in Desulfovibrio desulfuricans (strain ATCC 27774 / DSM 6949 / MB).